Here is a 558-residue protein sequence, read N- to C-terminus: Ribonuclease J (558 aa).

His81, His83, Asp85, His86, His148, and Asp170 together coordinate Zn(2+). Substrate is bound at residue 371-375 (HVSGH). His397 provides a ligand contact to Zn(2+).

The protein belongs to the metallo-beta-lactamase superfamily. RNA-metabolizing metallo-beta-lactamase-like family. Bacterial RNase J subfamily. In terms of assembly, homodimer, may be a subunit of the RNA degradosome. Zn(2+) serves as cofactor.

The protein resides in the cytoplasm. An RNase that has 5'-3' exonuclease and possibly endoonuclease activity. Involved in maturation of rRNA and in some organisms also mRNA maturation and/or decay. The sequence is that of Ribonuclease J from Mycobacterium tuberculosis (strain CDC 1551 / Oshkosh).